The following is a 35-amino-acid chain: uncharacterized protein (35 aa).

The helical transmembrane segment at 10–30 threads the bilayer; that stretch reads LMITASFFAIFIIIVVSVLLL.

It is found in the membrane. This is an uncharacterized protein from Salmonella typhimurium (strain LT2 / SGSC1412 / ATCC 700720).